The sequence spans 239 residues: tRNA (guanine-N(7)-)-methyltransferase (239 aa).

The segment covering 1–13 (MEAEVQQGQQSPE) has biased composition (polar residues). Residues 1-30 (MEAEVQQGQQSPEGQLEKRPPSPPWAGIPL) form a disordered region. 4 residues coordinate S-adenosyl-L-methionine: Asp-72, Glu-97, Asn-124, and Asp-147. The active site involves Asp-147. The substrate site is built by Lys-151 and Asp-183.

It belongs to the class I-like SAM-binding methyltransferase superfamily. TrmB family.

It catalyses the reaction guanosine(46) in tRNA + S-adenosyl-L-methionine = N(7)-methylguanosine(46) in tRNA + S-adenosyl-L-homocysteine. It functions in the pathway tRNA modification; N(7)-methylguanine-tRNA biosynthesis. In terms of biological role, catalyzes the formation of N(7)-methylguanine at position 46 (m7G46) in tRNA. This Synechococcus sp. (strain JA-2-3B'a(2-13)) (Cyanobacteria bacterium Yellowstone B-Prime) protein is tRNA (guanine-N(7)-)-methyltransferase.